An 804-amino-acid polypeptide reads, in one-letter code: Ribonucleoside-diphosphate reductase large subunit (804 aa).

The 92-residue stretch at 1 to 92 folds into the ATP-cone domain; it reads MYVLNRKGEE…TDNLHKNTSD (92 aa). ATP-binding positions include 5–6, 11–17, Thr53, and Asp57; these read NR and EDISFDQ. Position 216 (Ser216) interacts with GDP. A disulfide bridge links Cys217 with Cys442. Residues 225-227, Lys242, Arg255, and 262-263 each bind dTTP; these read DSI and RG. GDP is bound at residue Asn425. The Proton acceptor role is filled by Asn425. The active-site Cysteine radical intermediate is the Cys427. Residues Glu429 and 603–606 contribute to the GDP site; that span reads TAST. Glu429 serves as the catalytic Proton acceptor.

The protein belongs to the ribonucleoside diphosphate reductase large chain family. As to quaternary structure, heterodimer of a large and a small subunit.

It catalyses the reaction a 2'-deoxyribonucleoside 5'-diphosphate + [thioredoxin]-disulfide + H2O = a ribonucleoside 5'-diphosphate + [thioredoxin]-dithiol. Under complex allosteric control mediated by deoxynucleoside triphosphates and ATP binding to separate specificity and activation sites on the large subunit. The type of nucleotide bound at the specificity site determines substrate preference. It seems probable that ATP makes the enzyme reduce CDP and UDP, dGTP favors ADP reduction and dTTP favors GDP reduction. Stimulated by ATP and inhibited by dATP binding to the activity site. Provides the precursors necessary for DNA synthesis. Catalyzes the biosynthesis of deoxyribonucleotides from the corresponding ribonucleotides. The sequence is that of Ribonucleoside-diphosphate reductase large subunit (RNR1) from Plasmodium falciparum (isolate FCR-3 / Gambia).